Consider the following 352-residue polypeptide: rRNA 2'-O-methyltransferase fibrillarin (352 aa).

Residues 1 to 115 form a disordered region; it reads MGRPEFNRGG…GGAGGMRGGK (115 aa). Asymmetric dimethylarginine is present on residues R8, R16, R19, R23, R27, R35, R43, R51, R55, R58, R63, R67, R70, R75, R81, R85, R91, R95, R98, R102, R105, and R112. The segment covering 8–18 has biased composition (gly residues); it reads RGGGGGGFRGG. Residues 26-59 show a composition bias toward gly residues; it reads SRGGFGGGGRGGYGGGDRGSFGGGDRGGFRGGRG. Positions 66 to 113 are enriched in gly residues; sequence FRGGRGGGDRGGFGGRGSPRGGFGGRGSPRGGRGSPRGGRGGAGGMRG. Residues 203–204, 222–223, 247–248, and 267–270 each bind S-adenosyl-L-methionine; these read TT, EF, DA, and DVAQ.

Belongs to the methyltransferase superfamily. Fibrillarin family. In terms of assembly, component of box C/D small nucleolar ribonucleoprotein (snoRNP) particles. It is associated with the U3, U8 and U13 small nuclear RNAs. Post-translationally, by homology to other fibrillarins, some or all of the N-terminal domain arginines are modified to asymmetric dimethylarginine (DMA).

It is found in the nucleus. It localises to the nucleolus. The protein resides in the nucleoplasm. The enzyme catalyses L-glutaminyl-[histone H2A] + S-adenosyl-L-methionine = N(5)-methyl-L-glutaminyl-[histone H2A] + S-adenosyl-L-homocysteine + H(+). In terms of biological role, S-adenosyl-L-methionine-dependent methyltransferase that has the ability to methylate both RNAs and proteins. Involved in pre-rRNA processing. Utilizes the methyl donor S-adenosyl-L-methionine to catalyze the site-specific 2'-hydroxyl methylation of ribose moieties in pre-ribosomal RNA. Site specificity is provided by a guide RNA that base pairs with the substrate. Methylation occurs at a characteristic distance from the sequence involved in base pairing with the guide RNA. Also acts as a protein methyltransferase by mediating methylation of 'Gln-105' of histone H2A (H2AQ105me), a modification that impairs binding of the FACT complex and is specifically present at 35S ribosomal DNA locus. Plays a role in modulation of nucleolus size most likely through regulating the ribosomal RNA (rRNA) pool. The chain is rRNA 2'-O-methyltransferase fibrillarin from Caenorhabditis elegans.